The sequence spans 387 residues: Muscleblind-like protein 1 (387 aa).

Threonine 6 bears the Phosphothreonine mark. C3H1-type zinc fingers lie at residues 13–41, 47–73, 178–206, and 214–240; these read WLTLEVCREFQRGTCSRPDTECKFAHPSK, NGRVIACFDSLKGRCSRENCKYLHPPP, TDRLEVCREYQRGNCNRGENDCRFAHPAD, and DNTVTVCMDYIKGRCSREKCKYFHPPA.

This sequence belongs to the muscleblind family. In terms of assembly, interacts with DDX1 and YBX1. Interacts with HNRNPH1; the interaction in RNA-independent. Interacts with RBPMS; the interaction allows cooperative assembly of RNA-bound stable cell-specific alternative splicing regulatory complexes.

It localises to the nucleus. Its subcellular location is the cytoplasm. The protein resides in the cytoplasmic granule. Its function is as follows. Mediates pre-mRNA alternative splicing regulation. Acts either as activator or repressor of splicing on specific pre-mRNA targets. Inhibits cardiac troponin-T (TNNT2) pre-mRNA exon inclusion but induces insulin receptor (IR) pre-mRNA exon inclusion in muscle. Antagonizes the alternative splicing activity pattern of CELF proteins. Regulates the TNNT2 exon 5 skipping through competition with U2AF2. Inhibits the formation of the spliceosome A complex on intron 4 of TNNT2 pre-mRNA. Binds to the stem-loop structure within the polypyrimidine tract of TNNT2 intron 4 during spliceosome assembly. Binds to the 5'-YGCU(U/G)Y-3'consensus sequence. Binds to the IR RNA. Binds to expanded CUG repeat RNA, which folds into a hairpin structure containing GC base pairs and bulged, unpaired U residues. Together with RNA binding proteins RBPMS and RBFOX2, activates vascular smooth muscle cells alternative splicing events. Regulates NCOR2 alternative splicing. This Rattus norvegicus (Rat) protein is Muscleblind-like protein 1.